The primary structure comprises 376 residues: Glucose-1-phosphate adenylyltransferase (376 aa).

Alpha-D-glucose 1-phosphate contacts are provided by residues Y101, G166, 181-182 (EK), and S192.

The protein belongs to the bacterial/plant glucose-1-phosphate adenylyltransferase family. In terms of assembly, homotetramer.

The enzyme catalyses alpha-D-glucose 1-phosphate + ATP + H(+) = ADP-alpha-D-glucose + diphosphate. Its pathway is glycan biosynthesis; glycogen biosynthesis. In terms of biological role, involved in the biosynthesis of ADP-glucose, a building block required for the elongation reactions to produce glycogen. Catalyzes the reaction between ATP and alpha-D-glucose 1-phosphate (G1P) to produce pyrophosphate and ADP-Glc. In Bacillus cereus (strain ZK / E33L), this protein is Glucose-1-phosphate adenylyltransferase.